A 397-amino-acid polypeptide reads, in one-letter code: Diphosphomevalonate decarboxylase (397 aa).

(R)-5-diphosphomevalonate contacts are provided by residues 19 to 22 (YWGK), Arg74, 153 to 158 (SGSACR), and Thr209. The interval 378-397 (GPGPQDTKSSLIDPETGLPR) is disordered.

It belongs to the diphosphomevalonate decarboxylase family. As to quaternary structure, homodimer.

The enzyme catalyses (R)-5-diphosphomevalonate + ATP = isopentenyl diphosphate + ADP + phosphate + CO2. It participates in isoprenoid biosynthesis; isopentenyl diphosphate biosynthesis via mevalonate pathway; isopentenyl diphosphate from (R)-mevalonate: step 3/3. In terms of biological role, diphosphomevalonate decarboxylase; part of the second module of ergosterol biosynthesis pathway that includes the middle steps of the pathway. The second module is carried out in the vacuole and involves the formation of farnesyl diphosphate, which is also an important intermediate in the biosynthesis of ubiquinone, dolichol, heme and prenylated proteins. Activity by the mevalonate kinase ERG12 first converts mevalonate into 5-phosphomevalonate. 5-phosphomevalonate is then further converted to 5-diphosphomevalonate by the phosphomevalonate kinase ERG8. The diphosphomevalonate decarboxylase MVD1/ERG19 then produces isopentenyl diphosphate. The isopentenyl-diphosphate delta-isomerase IDI1 then catalyzes the 1,3-allylic rearrangement of the homoallylic substrate isopentenyl (IPP) to its highly electrophilic allylic isomer, dimethylallyl diphosphate (DMAPP). Finally the farnesyl diphosphate synthase ERG20 catalyzes the sequential condensation of isopentenyl pyrophosphate with dimethylallyl pyrophosphate, and then with the resultant geranylpyrophosphate to the ultimate product farnesyl pyrophosphate. The chain is Diphosphomevalonate decarboxylase from Eremothecium gossypii (strain ATCC 10895 / CBS 109.51 / FGSC 9923 / NRRL Y-1056) (Yeast).